A 236-amino-acid chain; its full sequence is (5-formylfuran-3-yl)methyl phosphate synthase (236 aa).

K27 (schiff-base intermediate with substrate) is an active-site residue. K85 functions as the Proton acceptor in the catalytic mechanism.

It belongs to the MfnB family.

It carries out the reaction 2 D-glyceraldehyde 3-phosphate = 4-(hydroxymethyl)-2-furancarboxaldehyde phosphate + phosphate + 2 H2O. The protein operates within cofactor biosynthesis; methanofuran biosynthesis. Catalyzes the formation of 4-(hydroxymethyl)-2-furancarboxaldehyde phosphate (4-HFC-P) from two molecules of glyceraldehyde-3-P (GA-3-P). This is (5-formylfuran-3-yl)methyl phosphate synthase from Methanococcus maripaludis (strain C6 / ATCC BAA-1332).